Here is a 309-residue protein sequence, read N- to C-terminus: Aspartate carbamoyltransferase catalytic subunit (309 aa).

Residues R48 and T49 each coordinate carbamoyl phosphate. An L-aspartate-binding site is contributed by K76. Positions 98, 128, and 131 each coordinate carbamoyl phosphate. Residues R161 and R211 each contribute to the L-aspartate site. Carbamoyl phosphate is bound by residues A250 and P251.

Belongs to the aspartate/ornithine carbamoyltransferase superfamily. ATCase family. In terms of assembly, heterododecamer (2C3:3R2) of six catalytic PyrB chains organized as two trimers (C3), and six regulatory PyrI chains organized as three dimers (R2).

The enzyme catalyses carbamoyl phosphate + L-aspartate = N-carbamoyl-L-aspartate + phosphate + H(+). It participates in pyrimidine metabolism; UMP biosynthesis via de novo pathway; (S)-dihydroorotate from bicarbonate: step 2/3. Catalyzes the condensation of carbamoyl phosphate and aspartate to form carbamoyl aspartate and inorganic phosphate, the committed step in the de novo pyrimidine nucleotide biosynthesis pathway. This Oceanobacillus iheyensis (strain DSM 14371 / CIP 107618 / JCM 11309 / KCTC 3954 / HTE831) protein is Aspartate carbamoyltransferase catalytic subunit.